The primary structure comprises 560 residues: DNA-directed primase/polymerase protein (560 aa).

Residues 1-22 (MNRKWEAKLKQIEERASHYERK) adopt a coiled-coil conformation. Substrate-binding positions include arginine 76, 114–116 (DLE), and 165–169 (KFSRH). Residues aspartate 114 and glutamate 116 each contribute to the Mn(2+) site. The interval 203–223 (EDDDSAPETTGHGFPHFSEAP) is disordered. Serine 255 is subject to Phosphoserine. Substrate-binding positions include 288–291 (RNFR) and lysine 297. Residues cysteine 419, histidine 426, cysteine 446, and cysteine 451 each contribute to the Zn(2+) site. A Zinc knuckle motif motif is present at residues 419–452 (CENIGRAHKSNNIMILVDLKNEVWYQKCHDPVCK). Positions 480–507 (TTDEADETRSNETQNPHKPSPSRLSTGA) are disordered. The tract at residues 481-560 (TDEADETRSN…DELIIEVLQE (80 aa)) is interaction with RPA1. Residues 490–507 (NETQNPHKPSPSRLSTGA) are compositionally biased toward polar residues. Short sequence motifs (RPA1-binding motif) lie at residues 513–527 (WDNG…EATE) and 548–556 (EIPDELIIE).

It belongs to the eukaryotic-type primase small subunit family. Interacts with RPA1; leading to recruitment to chromatin and stimulate DNA primase activity. Interacts with SSBP1. Interacts with POLDIP2; leading to enhance DNA polymerase activity. Mn(2+) serves as cofactor.

The protein resides in the nucleus. Its subcellular location is the mitochondrion matrix. It localises to the chromosome. The enzyme catalyses ssDNA + n NTP = ssDNA/pppN(pN)n-1 hybrid + (n-1) diphosphate.. It carries out the reaction DNA(n) + a 2'-deoxyribonucleoside 5'-triphosphate = DNA(n+1) + diphosphate. Its function is as follows. DNA primase and DNA polymerase required to tolerate replication-stalling lesions by bypassing them. Required to facilitate mitochondrial and nuclear replication fork progression by initiating de novo DNA synthesis using dNTPs and acting as an error-prone DNA polymerase able to bypass certain DNA lesions. Shows a high capacity to tolerate DNA damage lesions such as 8oxoG and abasic sites in DNA. Provides different translesion synthesis alternatives when DNA replication is stalled: able to synthesize DNA primers downstream of lesions, such as ultraviolet (UV) lesions, R-loops and G-quadruplexes, to allow DNA replication to continue. Can also realign primers ahead of 'unreadable lesions' such as abasic sites and 6-4 photoproduct (6-4 pyrimidine-pyrimidinone), thereby skipping the lesion. Repriming avoids fork degradation while leading to accumulation of internal ssDNA gaps behind the forks. Also able to incorporate nucleotides opposite DNA lesions such as 8oxoG, like a regular translesion synthesis DNA polymerase. Also required for reinitiating stalled forks after UV damage during nuclear DNA replication. Required for mitochondrial DNA (mtDNA) synthesis and replication, by reinitiating synthesis after UV damage or in the presence of chain-terminating nucleotides. Prevents APOBEC family-mediated DNA mutagenesis by repriming downstream of abasic site to prohibit error-prone translesion synthesis. Has non-overlapping function with POLH. In addition to its role in DNA damage response, also required to maintain efficient nuclear and mitochondrial DNA replication in unperturbed cells. This is DNA-directed primase/polymerase protein from Homo sapiens (Human).